We begin with the raw amino-acid sequence, 357 residues long: Dual-specificity RNA methyltransferase RlmN (357 aa).

Residue Glu89 is the Proton acceptor of the active site. Positions 109 to 340 constitute a Radical SAM core domain; it reads EGEKYTVCVS…CTIRESKALD (232 aa). Cys116 and Cys345 form a disulfide bridge. [4Fe-4S] cluster is bound by residues Cys123, Cys127, and Cys130. S-adenosyl-L-methionine is bound by residues 173-174, Ser203, 226-228, and Asn302; these read GE and SLH. Cys345 (S-methylcysteine intermediate) is an active-site residue.

It belongs to the radical SAM superfamily. RlmN family. Requires [4Fe-4S] cluster as cofactor.

The protein localises to the cytoplasm. It catalyses the reaction adenosine(2503) in 23S rRNA + 2 reduced [2Fe-2S]-[ferredoxin] + 2 S-adenosyl-L-methionine = 2-methyladenosine(2503) in 23S rRNA + 5'-deoxyadenosine + L-methionine + 2 oxidized [2Fe-2S]-[ferredoxin] + S-adenosyl-L-homocysteine. It carries out the reaction adenosine(37) in tRNA + 2 reduced [2Fe-2S]-[ferredoxin] + 2 S-adenosyl-L-methionine = 2-methyladenosine(37) in tRNA + 5'-deoxyadenosine + L-methionine + 2 oxidized [2Fe-2S]-[ferredoxin] + S-adenosyl-L-homocysteine. In terms of biological role, specifically methylates position 2 of adenine 2503 in 23S rRNA and position 2 of adenine 37 in tRNAs. m2A2503 modification seems to play a crucial role in the proofreading step occurring at the peptidyl transferase center and thus would serve to optimize ribosomal fidelity. This chain is Dual-specificity RNA methyltransferase RlmN, found in Helicobacter pylori (strain G27).